We begin with the raw amino-acid sequence, 295 residues long: Small ribosomal subunit protein uS2 (295 aa).

Residues Trp-273–Trp-295 form a disordered region. Residues Ala-274 to Trp-295 are compositionally biased toward low complexity.

The protein belongs to the universal ribosomal protein uS2 family. As to quaternary structure, component of the small ribosomal subunit. Mature ribosomes consist of a small (40S) and a large (60S) subunit. The 40S subunit contains about 33 different proteins and 1 molecule of RNA (18S). The 60S subunit contains about 49 different proteins and 3 molecules of RNA (25S, 5.8S and 5S). Interacts with RPS21.

Its subcellular location is the cytoplasm. Its function is as follows. Required for the assembly and/or stability of the 40S ribosomal subunit. Required for the processing of the 20S rRNA-precursor to mature 18S rRNA in a late step of the maturation of 40S ribosomal subunits. The chain is Small ribosomal subunit protein uS2 from Paracoccidioides lutzii (strain ATCC MYA-826 / Pb01) (Paracoccidioides brasiliensis).